The primary structure comprises 148 residues: Protein-arginine-phosphatase (148 aa).

The active-site Nucleophile is the Cys-9. 10-15 is a substrate binding site; sequence TGNTCR. Arg-15 is a catalytic residue. Asp-117 functions as the Proton donor in the catalytic mechanism.

The protein belongs to the low molecular weight phosphotyrosine protein phosphatase family. As to quaternary structure, is present in solution as a mixture of monomers, dimers and higher order oligomers (trimers and tetramers).

The catalysed reaction is N(omega)-phospho-L-arginyl-[protein] + H2O = L-arginyl-[protein] + phosphate. Irreversibly inhibited by the synthetic inhibitor cyc-SeCN-amidine, which inactivates the enzyme by inducing disulfide bond formation between the two active site cysteine residues Cys-9 and Cys-14. Catalyzes the specific dephosphorylation of phosphoarginine residues in proteins. Probably counteracts the protein arginine kinase McsB in vivo. Exhibits almost no activity against pTyr peptides. Protein arginine phosphorylation has a physiologically important role and is involved in the regulation of many critical cellular processes, such as protein homeostasis, motility, competence, and stringent and stress responses, by regulating gene expression and protein activity. This Geobacillus stearothermophilus (Bacillus stearothermophilus) protein is Protein-arginine-phosphatase (ywle).